The chain runs to 222 residues: Endonuclease V (222 aa).

Mg(2+) contacts are provided by Asp43 and Asp109.

The protein belongs to the endonuclease V family. The cofactor is Mg(2+).

It localises to the cytoplasm. It carries out the reaction Endonucleolytic cleavage at apurinic or apyrimidinic sites to products with a 5'-phosphate.. In terms of biological role, DNA repair enzyme involved in the repair of deaminated bases. Selectively cleaves double-stranded DNA at the second phosphodiester bond 3' to a deoxyinosine leaving behind the intact lesion on the nicked DNA. The polypeptide is Endonuclease V (Roseiflexus sp. (strain RS-1)).